A 423-amino-acid chain; its full sequence is Serine--tRNA ligase (423 aa).

228–230 is an L-serine binding site; that stretch reads TSE. Residue 259–261 coordinates ATP; sequence RLE. Glutamate 282 serves as a coordination point for L-serine. 346–349 lines the ATP pocket; the sequence is EISS. Serine 384 is a binding site for L-serine.

The protein belongs to the class-II aminoacyl-tRNA synthetase family. Type-1 seryl-tRNA synthetase subfamily. Homodimer. The tRNA molecule binds across the dimer.

It is found in the cytoplasm. The catalysed reaction is tRNA(Ser) + L-serine + ATP = L-seryl-tRNA(Ser) + AMP + diphosphate + H(+). It carries out the reaction tRNA(Sec) + L-serine + ATP = L-seryl-tRNA(Sec) + AMP + diphosphate + H(+). It functions in the pathway aminoacyl-tRNA biosynthesis; selenocysteinyl-tRNA(Sec) biosynthesis; L-seryl-tRNA(Sec) from L-serine and tRNA(Sec): step 1/1. Functionally, catalyzes the attachment of serine to tRNA(Ser). Is also able to aminoacylate tRNA(Sec) with serine, to form the misacylated tRNA L-seryl-tRNA(Sec), which will be further converted into selenocysteinyl-tRNA(Sec). The protein is Serine--tRNA ligase of Ehrlichia canis (strain Jake).